The following is a 215-amino-acid chain: Probable nicotinate-nucleotide adenylyltransferase (215 aa).

Belongs to the NadD family.

It carries out the reaction nicotinate beta-D-ribonucleotide + ATP + H(+) = deamido-NAD(+) + diphosphate. The protein operates within cofactor biosynthesis; NAD(+) biosynthesis; deamido-NAD(+) from nicotinate D-ribonucleotide: step 1/1. Functionally, catalyzes the reversible adenylation of nicotinate mononucleotide (NaMN) to nicotinic acid adenine dinucleotide (NaAD). The chain is Probable nicotinate-nucleotide adenylyltransferase from Gluconacetobacter diazotrophicus (strain ATCC 49037 / DSM 5601 / CCUG 37298 / CIP 103539 / LMG 7603 / PAl5).